A 148-amino-acid polypeptide reads, in one-letter code: Major microfilarial sheath protein (148 aa).

An N-terminal signal peptide occupies residues 1–18 (MCCKAILSFCILSSLGNA). Positions 19–43 (LYFGSHRPQYLREVGQRQYPFEPQA) are cleaved as a propeptide — removed in mature form. Repeats lie at residues 46–50 (MLPVP), 54–58 (MGPQP), 59–63 (MGPQP), 64–68 (MEPQP), and 71–75 (MGPQS). The tract at residues 46 to 75 (MLPVPQQPMGPQPMGPQPMEPQPLPMGPQS) is repeat-rich region. Pro residues predominate over residues 52–73 (QPMGPQPMGPQPMEPQPLPMGP). The segment at 52 to 80 (QPMGPQPMGPQPMEPQPLPMGPQSPQMQV) is disordered.

The protein to B.pahangi filarial sheath protein. Post-translationally, O-glycosylated.

The chain is Major microfilarial sheath protein (GP22) from Litomosoides carinii.